A 290-amino-acid polypeptide reads, in one-letter code: ATP synthase gamma chain (290 aa).

The protein belongs to the ATPase gamma chain family. F-type ATPases have 2 components, CF(1) - the catalytic core - and CF(0) - the membrane proton channel. CF(1) has five subunits: alpha(3), beta(3), gamma(1), delta(1), epsilon(1). CF(0) has three main subunits: a, b and c.

The protein resides in the cell inner membrane. In terms of biological role, produces ATP from ADP in the presence of a proton gradient across the membrane. The gamma chain is believed to be important in regulating ATPase activity and the flow of protons through the CF(0) complex. This chain is ATP synthase gamma chain, found in Phenylobacterium zucineum (strain HLK1).